Consider the following 409-residue polypeptide: Peptidase T (409 aa).

Position 79 (histidine 79) interacts with Zn(2+). Residue aspartate 81 is part of the active site. Aspartate 140 contacts Zn(2+). Glutamate 174 functions as the Proton acceptor in the catalytic mechanism. Zn(2+) is bound by residues glutamate 175, aspartate 197, and histidine 379.

This sequence belongs to the peptidase M20B family. Zn(2+) is required as a cofactor.

The protein resides in the cytoplasm. It catalyses the reaction Release of the N-terminal residue from a tripeptide.. Cleaves the N-terminal amino acid of tripeptides. The chain is Peptidase T from Lysinibacillus sphaericus (strain C3-41).